A 350-amino-acid polypeptide reads, in one-letter code: Protein RecA (350 aa).

65 to 72 (GPESSGKT) serves as a coordination point for ATP. Positions 326-350 (HNLKTRNTADSKVTGAKDEKSKEEK) are disordered. A compositionally biased stretch (basic and acidic residues) spans 340-350 (GAKDEKSKEEK).

Belongs to the RecA family.

It is found in the cytoplasm. Can catalyze the hydrolysis of ATP in the presence of single-stranded DNA, the ATP-dependent uptake of single-stranded DNA by duplex DNA, and the ATP-dependent hybridization of homologous single-stranded DNAs. It interacts with LexA causing its activation and leading to its autocatalytic cleavage. This is Protein RecA from Clostridium novyi (strain NT).